The sequence spans 309 residues: HPr kinase/phosphorylase (309 aa).

Active-site residues include histidine 138 and lysine 159. 153 to 160 (GDSGIGKS) is an ATP binding site. Serine 160 provides a ligand contact to Mg(2+). The active-site Proton acceptor; for phosphorylation activity. Proton donor; for dephosphorylation activity is aspartate 177. An important for the catalytic mechanism of both phosphorylation and dephosphorylation region spans residues 201–210 (LEIRGVGIID). Mg(2+) is bound at residue glutamate 202. The active site involves arginine 243. Residues 264–269 (PVKTGR) are important for the catalytic mechanism of dephosphorylation.

It belongs to the HPrK/P family. In terms of assembly, homohexamer. Mg(2+) is required as a cofactor.

The catalysed reaction is [HPr protein]-L-serine + ATP = [HPr protein]-O-phospho-L-serine + ADP + H(+). The enzyme catalyses [HPr protein]-O-phospho-L-serine + phosphate + H(+) = [HPr protein]-L-serine + diphosphate. Catalyzes the ATP- as well as the pyrophosphate-dependent phosphorylation of a specific serine residue in HPr, a phosphocarrier protein of the phosphoenolpyruvate-dependent sugar phosphotransferase system (PTS). HprK/P also catalyzes the pyrophosphate-producing, inorganic phosphate-dependent dephosphorylation (phosphorolysis) of seryl-phosphorylated HPr (P-Ser-HPr). The two antagonistic activities of HprK/P are regulated by several intracellular metabolites, which change their concentration in response to the absence or presence of rapidly metabolisable carbon sources (glucose, fructose, etc.) in the growth medium. Therefore, by controlling the phosphorylation state of HPr, HPrK/P is a sensor enzyme that plays a major role in the regulation of carbon metabolism and sugar transport: it mediates carbon catabolite repression (CCR), and regulates PTS-catalyzed carbohydrate uptake and inducer exclusion. This chain is HPr kinase/phosphorylase, found in Streptococcus thermophilus (strain CNRZ 1066).